Reading from the N-terminus, the 138-residue chain is Ribulose bisphosphate carboxylase small subunit (138 aa).

This sequence belongs to the RuBisCO small chain family. Heterohexadecamer of 8 large and 8 small subunits.

The protein localises to the plastid. The protein resides in the chloroplast. RuBisCO catalyzes two reactions: the carboxylation of D-ribulose 1,5-bisphosphate, the primary event in carbon dioxide fixation, as well as the oxidative fragmentation of the pentose substrate in the photorespiration process. Both reactions occur simultaneously and in competition at the same active site. Although the small subunit is not catalytic it is essential for maximal activity. This chain is Ribulose bisphosphate carboxylase small subunit, found in Porphyridium aerugineum (Red microalga).